An 80-amino-acid polypeptide reads, in one-letter code: Pre-core protein X (80 aa).

Positions 2–32 are excised as a propeptide; sequence ALTCRLRFPVPGFRGRMHRRRGMAGHGLTGG. The tract at residues 18–45 is disordered; sequence MHRRRGMAGHGLTGGMRRAHHRRRRASH. The segment covering 34–45 has biased composition (basic residues); that stretch reads RRAHHRRRRASH. A propeptide spanning residues 52 to 80 is cleaved from the precursor; it reads ILPLLIPLIAAAIGAVPGIASVALQAQRH.

The protein belongs to the adenoviridae core protein X family. Interacts with the core-capsid bridging protein; this interaction bridges the virus core to the capsid. In terms of processing, cleaved by the viral protease during virion maturation to form the mature protein.

Its subcellular location is the host nucleus. It localises to the host nucleolus. The protein localises to the virion. In terms of biological role, interacts with the viral DNA and aids in tightly condensing it within the capsid. Cleavage of pre-core protein X may serve to partially relax this structure within the mature virion prior to its entry into the nucleus. This chain is Pre-core protein X, found in Human adenovirus C serotype 2 (HAdV-2).